The sequence spans 482 residues: tRNA sulfurtransferase (482 aa).

Residues 61 to 165 (PAIRDALTRI…NDRLLLVKGR (105 aa)) enclose the THUMP domain. Residues 183-184 (LI), K265, G287, and Q296 contribute to the ATP site. Cysteines 344 and 456 form a disulfide. A Rhodanese domain is found at 404-482 (FGANDAILDI…GFSNVKVYRP (79 aa)). Catalysis depends on C456, which acts as the Cysteine persulfide intermediate.

The protein belongs to the ThiI family.

Its subcellular location is the cytoplasm. The catalysed reaction is [ThiI sulfur-carrier protein]-S-sulfanyl-L-cysteine + a uridine in tRNA + 2 reduced [2Fe-2S]-[ferredoxin] + ATP + H(+) = [ThiI sulfur-carrier protein]-L-cysteine + a 4-thiouridine in tRNA + 2 oxidized [2Fe-2S]-[ferredoxin] + AMP + diphosphate. It carries out the reaction [ThiS sulfur-carrier protein]-C-terminal Gly-Gly-AMP + S-sulfanyl-L-cysteinyl-[cysteine desulfurase] + AH2 = [ThiS sulfur-carrier protein]-C-terminal-Gly-aminoethanethioate + L-cysteinyl-[cysteine desulfurase] + A + AMP + 2 H(+). The protein operates within cofactor biosynthesis; thiamine diphosphate biosynthesis. Functionally, catalyzes the ATP-dependent transfer of a sulfur to tRNA to produce 4-thiouridine in position 8 of tRNAs, which functions as a near-UV photosensor. Also catalyzes the transfer of sulfur to the sulfur carrier protein ThiS, forming ThiS-thiocarboxylate. This is a step in the synthesis of thiazole, in the thiamine biosynthesis pathway. The sulfur is donated as persulfide by IscS. This is tRNA sulfurtransferase from Klebsiella pneumoniae (strain 342).